Reading from the N-terminus, the 319-residue chain is Probable arabinan endo-1,5-alpha-L-arabinosidase A (319 aa).

Residues 1–19 (MYLQSSLALVLLRAAVVHG) form the signal peptide. The active-site Proton acceptor is Asp34. An N-linked (GlcNAc...) asparagine glycan is attached at Asn53. Glu198 (proton donor) is an active-site residue.

Belongs to the glycosyl hydrolase 43 family.

Its subcellular location is the secreted. The enzyme catalyses Endohydrolysis of (1-&gt;5)-alpha-arabinofuranosidic linkages in (1-&gt;5)-arabinans.. It participates in glycan metabolism; L-arabinan degradation. Endo-1,5-alpha-L-arabinanase involved in degradation of pectin. Its preferred substrate is linear 1,5-alpha-L-arabinan. The polypeptide is Probable arabinan endo-1,5-alpha-L-arabinosidase A (abnA) (Aspergillus flavus (strain ATCC 200026 / FGSC A1120 / IAM 13836 / NRRL 3357 / JCM 12722 / SRRC 167)).